The sequence spans 543 residues: Probable malate:quinone oxidoreductase (543 aa).

Belongs to the MQO family. The cofactor is FAD.

The enzyme catalyses (S)-malate + a quinone = a quinol + oxaloacetate. Its pathway is carbohydrate metabolism; tricarboxylic acid cycle; oxaloacetate from (S)-malate (quinone route): step 1/1. This is Probable malate:quinone oxidoreductase from Acinetobacter baylyi (strain ATCC 33305 / BD413 / ADP1).